The primary structure comprises 266 residues: Glutamate racemase (266 aa).

Substrate-binding positions include 9–10 and 41–42; these read DS and YG. Cys72 (proton donor/acceptor) is an active-site residue. 73 to 74 contributes to the substrate binding site; that stretch reads NT. The active-site Proton donor/acceptor is Cys184. Residue 185-186 participates in substrate binding; sequence TH.

Belongs to the aspartate/glutamate racemases family. In terms of assembly, homodimer.

It catalyses the reaction L-glutamate = D-glutamate. It functions in the pathway cell wall biogenesis; peptidoglycan biosynthesis. Functionally, provides the (R)-glutamate required for cell wall biosynthesis. This is Glutamate racemase from Staphylococcus aureus (strain MRSA252).